The primary structure comprises 533 residues: L-aspartate oxidase 1 (533 aa).

Residues 10–13, K32, 39–46, and D214 each bind FAD; these read SGLA and ASDWAQGG. The Proton donor/acceptor role is filled by R281. FAD is bound by residues E366 and 382–383; that span reads SL.

Belongs to the FAD-dependent oxidoreductase 2 family. NadB subfamily. The cofactor is FAD.

It localises to the cytoplasm. It catalyses the reaction L-aspartate + O2 = iminosuccinate + H2O2. It participates in cofactor biosynthesis; NAD(+) biosynthesis; iminoaspartate from L-aspartate (oxidase route): step 1/1. Catalyzes the oxidation of L-aspartate to iminoaspartate, the first step in the de novo biosynthesis of NAD(+). This is L-aspartate oxidase 1 (nadB1) from Ralstonia nicotianae (strain ATCC BAA-1114 / GMI1000) (Ralstonia solanacearum).